Here is a 269-residue protein sequence, read N- to C-terminus: Integral membrane protein 2C (269 aa).

Phosphothreonine is present on threonine 39. A helical; Signal-anchor for type II membrane protein transmembrane segment spans residues 57–77 (VGGVCYLSMGMVVLLMGLVFA). The BRICHOS domain occupies 138 to 232 (FGGGDPADII…LCNGKDTYRL (95 aa)). A disulfide bond links cysteine 165 and cysteine 224. Residue asparagine 171 is glycosylated (N-linked (GlcNAc...) asparagine).

It belongs to the ITM2 family. Interacts with BACE1. Interacts with APP. Interacts with STMN2. Type I membrane-bound, as well as soluble, furin has a pre-eminent role in ITM2C proteolytic processing. PCSK7 and PCSK5 may also be involved although to a lesser extent. The soluble form of PCSK7 is incapable of processing ITM2C. Fails to undergo shedding by ADAM10 and intramembrane cleavage by SPPL2B.

Its subcellular location is the lysosome membrane. It is found in the cell membrane. In terms of biological role, negative regulator of amyloid-beta peptide production. May inhibit the processing of APP by blocking its access to alpha- and beta-secretase. Binding to the beta-secretase-cleaved APP C-terminal fragment is negligible, suggesting that ITM2C is a poor gamma-secretase cleavage inhibitor. May play a role in TNF-induced cell death and neuronal differentiation. The protein is Integral membrane protein 2C (Itm2c) of Rattus norvegicus (Rat).